The following is a 257-amino-acid chain: 3-deoxy-manno-octulosonate cytidylyltransferase (257 aa).

It belongs to the KdsB family.

It is found in the cytoplasm. The enzyme catalyses 3-deoxy-alpha-D-manno-oct-2-ulosonate + CTP = CMP-3-deoxy-beta-D-manno-octulosonate + diphosphate. It functions in the pathway nucleotide-sugar biosynthesis; CMP-3-deoxy-D-manno-octulosonate biosynthesis; CMP-3-deoxy-D-manno-octulosonate from 3-deoxy-D-manno-octulosonate and CTP: step 1/1. Its pathway is bacterial outer membrane biogenesis; lipopolysaccharide biosynthesis. In terms of biological role, activates KDO (a required 8-carbon sugar) for incorporation into bacterial lipopolysaccharide in Gram-negative bacteria. The chain is 3-deoxy-manno-octulosonate cytidylyltransferase from Albidiferax ferrireducens (strain ATCC BAA-621 / DSM 15236 / T118) (Rhodoferax ferrireducens).